Here is a 30-residue protein sequence, read N- to C-terminus: Protein ScvA (30 aa).

A disordered region spans residues 1–30 (MERQNVQQQRGKDQRPQRPGASNPRRPNQR).

Functionally, might be involved in DNA-binding; the protein binds DNA in gel-shift assays and immunogold electron microscopy shows labelling of condensed chromatin. The polypeptide is Protein ScvA (scvA) (Coxiella burnetii (strain RSA 493 / Nine Mile phase I)).